A 318-amino-acid polypeptide reads, in one-letter code: Transaldolase (318 aa).

Residue Lys-126 is the Schiff-base intermediate with substrate of the active site.

The protein belongs to the transaldolase family. Type 1 subfamily. Homodimer.

It localises to the cytoplasm. It carries out the reaction D-sedoheptulose 7-phosphate + D-glyceraldehyde 3-phosphate = D-erythrose 4-phosphate + beta-D-fructose 6-phosphate. It functions in the pathway carbohydrate degradation; pentose phosphate pathway; D-glyceraldehyde 3-phosphate and beta-D-fructose 6-phosphate from D-ribose 5-phosphate and D-xylulose 5-phosphate (non-oxidative stage): step 2/3. Functionally, transaldolase is important for the balance of metabolites in the pentose-phosphate pathway. The sequence is that of Transaldolase from Cupriavidus metallidurans (strain ATCC 43123 / DSM 2839 / NBRC 102507 / CH34) (Ralstonia metallidurans).